Here is a 255-residue protein sequence, read N- to C-terminus: Imidazole glycerol phosphate synthase subunit HisF (255 aa).

Active-site residues include Asp-12 and Asp-131.

This sequence belongs to the HisA/HisF family. Heterodimer of HisH and HisF.

It is found in the cytoplasm. The enzyme catalyses 5-[(5-phospho-1-deoxy-D-ribulos-1-ylimino)methylamino]-1-(5-phospho-beta-D-ribosyl)imidazole-4-carboxamide + L-glutamine = D-erythro-1-(imidazol-4-yl)glycerol 3-phosphate + 5-amino-1-(5-phospho-beta-D-ribosyl)imidazole-4-carboxamide + L-glutamate + H(+). The protein operates within amino-acid biosynthesis; L-histidine biosynthesis; L-histidine from 5-phospho-alpha-D-ribose 1-diphosphate: step 5/9. In terms of biological role, IGPS catalyzes the conversion of PRFAR and glutamine to IGP, AICAR and glutamate. The HisF subunit catalyzes the cyclization activity that produces IGP and AICAR from PRFAR using the ammonia provided by the HisH subunit. The polypeptide is Imidazole glycerol phosphate synthase subunit HisF (Ignicoccus hospitalis (strain KIN4/I / DSM 18386 / JCM 14125)).